Consider the following 402-residue polypeptide: Tyrosine--tRNA ligase (402 aa).

The 'HIGH' region signature appears at 48 to 57 (PSRPDLHLGH). Positions 232–236 (KMSKS) match the 'KMSKS' region motif. K235 lines the ATP pocket. An S4 RNA-binding domain is found at 339-402 (MPIIDLLTLL…KRKFFKIRSK (64 aa)).

The protein belongs to the class-I aminoacyl-tRNA synthetase family. TyrS type 2 subfamily. As to quaternary structure, homodimer.

It is found in the cytoplasm. The enzyme catalyses tRNA(Tyr) + L-tyrosine + ATP = L-tyrosyl-tRNA(Tyr) + AMP + diphosphate + H(+). Its function is as follows. Catalyzes the attachment of tyrosine to tRNA(Tyr) in a two-step reaction: tyrosine is first activated by ATP to form Tyr-AMP and then transferred to the acceptor end of tRNA(Tyr). The chain is Tyrosine--tRNA ligase from Chlorobium chlorochromatii (strain CaD3).